The following is a 274-amino-acid chain: Acetyl-coenzyme A carboxylase carboxyl transferase subunit alpha (274 aa).

Residues 2-250 (NKEFIKSIVV…KKEIMNAMNE (249 aa)) enclose the CoA carboxyltransferase C-terminal domain.

It belongs to the AccA family. Acetyl-CoA carboxylase is a heterohexamer composed of biotin carboxyl carrier protein (AccB), biotin carboxylase (AccC) and two subunits each of ACCase subunit alpha (AccA) and ACCase subunit beta (AccD).

It localises to the cytoplasm. The enzyme catalyses N(6)-carboxybiotinyl-L-lysyl-[protein] + acetyl-CoA = N(6)-biotinyl-L-lysyl-[protein] + malonyl-CoA. It participates in lipid metabolism; malonyl-CoA biosynthesis; malonyl-CoA from acetyl-CoA: step 1/1. Its function is as follows. Component of the acetyl coenzyme A carboxylase (ACC) complex. First, biotin carboxylase catalyzes the carboxylation of biotin on its carrier protein (BCCP) and then the CO(2) group is transferred by the carboxyltransferase to acetyl-CoA to form malonyl-CoA. This Clostridium botulinum (strain Alaska E43 / Type E3) protein is Acetyl-coenzyme A carboxylase carboxyl transferase subunit alpha.